A 603-amino-acid polypeptide reads, in one-letter code: MVDQRHIRNFCIIAHIDHGKSTLADRLIEFTGVLTKREMTDQVLDNMELERERGITIKAQSVRMDYVADDGEQYVLNLIDTPGHVDFTYEVSRALAACEGALLVVDASQGIEAQTLANVYMALEHDLEIIPVINKIDLPAADPEKVKKEIEEVIGLDTSIAILASAKTGIGMKEILEAVVNFVPPPKGDRRAPLRALIYDSFYDSYKGVITYFRIFEGTVRKGDRIRFMATGKEFIVDELYIFRPGLTPVEELTAGEVGALAATIREVKHVRVGDTITLADNPAAEPLPGYRKATPMVFTGLYPVETNDYGRLRDALEKLQLNDASLSFEPETSEALGFGFRCGFLGLLHMDVIQERLEREFDLNLITTAPNVVYRVNMTSGEQIMIENPANWPDPSKIESVEEPVVRASIITPTEYVGPLMELCQDRRGTFLNMEYLNEKRVNLHYKLPLAEIMYDFFDQLKTRSRGYASFDYEVTGYEPSDMVKMDILVHGQPVDALSCIVHREKAQKLGRALVQKLRKLIPRHLFEVPIQAAVGNKILARENIAPLRKDVLAKCYGGDVTRKRKLLEKQKEGKKRMKAVGSVEIPQEAFMAVLSTDPDED.

A tr-type G domain is found at Arg5–Lys187. Residues Asp17–Thr22 and Asn134–Asp137 each bind GTP.

Belongs to the TRAFAC class translation factor GTPase superfamily. Classic translation factor GTPase family. LepA subfamily.

Its subcellular location is the cell membrane. The catalysed reaction is GTP + H2O = GDP + phosphate + H(+). In terms of biological role, required for accurate and efficient protein synthesis under certain stress conditions. May act as a fidelity factor of the translation reaction, by catalyzing a one-codon backward translocation of tRNAs on improperly translocated ribosomes. Back-translocation proceeds from a post-translocation (POST) complex to a pre-translocation (PRE) complex, thus giving elongation factor G a second chance to translocate the tRNAs correctly. Binds to ribosomes in a GTP-dependent manner. In Symbiobacterium thermophilum (strain DSM 24528 / JCM 14929 / IAM 14863 / T), this protein is Elongation factor 4.